Consider the following 134-residue polypeptide: Phosphoribosyl-ATP pyrophosphatase 2 (134 aa).

This sequence belongs to the PRA-PH family.

It is found in the cytoplasm. The enzyme catalyses 1-(5-phospho-beta-D-ribosyl)-ATP + H2O = 1-(5-phospho-beta-D-ribosyl)-5'-AMP + diphosphate + H(+). It participates in amino-acid biosynthesis; L-histidine biosynthesis; L-histidine from 5-phospho-alpha-D-ribose 1-diphosphate: step 2/9. The sequence is that of Phosphoribosyl-ATP pyrophosphatase 2 (hisE2) from Bradyrhizobium diazoefficiens (strain JCM 10833 / BCRC 13528 / IAM 13628 / NBRC 14792 / USDA 110).